The sequence spans 133 residues: ATP synthase epsilon chain, chloroplastic (133 aa).

It belongs to the ATPase epsilon chain family. In terms of assembly, F-type ATPases have 2 components, CF(1) - the catalytic core - and CF(0) - the membrane proton channel. CF(1) has five subunits: alpha(3), beta(3), gamma(1), delta(1), epsilon(1). CF(0) has three main subunits: a, b and c.

The protein localises to the plastid. The protein resides in the chloroplast thylakoid membrane. In terms of biological role, produces ATP from ADP in the presence of a proton gradient across the membrane. This chain is ATP synthase epsilon chain, chloroplastic, found in Chara vulgaris (Common stonewort).